The primary structure comprises 204 residues: Protein XpaC (204 aa).

Its function is as follows. In double copy it causes aberrant cell morphology, filamentation and inhibits sporulation. Hydrolyzes 5-bromo-4-chloroindolyl phosphate. This Bacillus subtilis (strain 168) protein is Protein XpaC (xpaC).